We begin with the raw amino-acid sequence, 113 residues long: Large ribosomal subunit protein uL22 (113 aa).

It belongs to the universal ribosomal protein uL22 family. In terms of assembly, part of the 50S ribosomal subunit.

Its function is as follows. This protein binds specifically to 23S rRNA; its binding is stimulated by other ribosomal proteins, e.g. L4, L17, and L20. It is important during the early stages of 50S assembly. It makes multiple contacts with different domains of the 23S rRNA in the assembled 50S subunit and ribosome. Functionally, the globular domain of the protein is located near the polypeptide exit tunnel on the outside of the subunit, while an extended beta-hairpin is found that lines the wall of the exit tunnel in the center of the 70S ribosome. This chain is Large ribosomal subunit protein uL22, found in Carboxydothermus hydrogenoformans (strain ATCC BAA-161 / DSM 6008 / Z-2901).